The following is a 280-amino-acid chain: UPF0273 protein SSO1861 (280 aa).

In terms of domain architecture, KaiC spans 2-246 (KRVKTYIPGL…YLKISNWSVS (245 aa)). 29-36 (GGPGTGKS) contacts ATP.

The protein belongs to the UPF0273 family.

This chain is UPF0273 protein SSO1861, found in Saccharolobus solfataricus (strain ATCC 35092 / DSM 1617 / JCM 11322 / P2) (Sulfolobus solfataricus).